Reading from the N-terminus, the 285-residue chain is Acetyl-coenzyme A carboxylase carboxyl transferase subunit beta (285 aa).

Positions 24-285 (GLWYKSPTGK…DLIQNQPVRA (262 aa)) constitute a CoA carboxyltransferase N-terminal domain.

This sequence belongs to the AccD/PCCB family. As to quaternary structure, acetyl-CoA carboxylase is a heterohexamer composed of biotin carboxyl carrier protein (AccB), biotin carboxylase (AccC) and two subunits each of ACCase subunit alpha (AccA) and ACCase subunit beta (AccD).

It localises to the cytoplasm. The enzyme catalyses N(6)-carboxybiotinyl-L-lysyl-[protein] + acetyl-CoA = N(6)-biotinyl-L-lysyl-[protein] + malonyl-CoA. It functions in the pathway lipid metabolism; malonyl-CoA biosynthesis; malonyl-CoA from acetyl-CoA: step 1/1. Its function is as follows. Component of the acetyl coenzyme A carboxylase (ACC) complex. Biotin carboxylase (BC) catalyzes the carboxylation of biotin on its carrier protein (BCCP) and then the CO(2) group is transferred by the transcarboxylase to acetyl-CoA to form malonyl-CoA. This chain is Acetyl-coenzyme A carboxylase carboxyl transferase subunit beta, found in Christiangramia forsetii (strain DSM 17595 / CGMCC 1.15422 / KT0803) (Gramella forsetii).